The following is an 82-amino-acid chain: Protein transport protein SBH1 (82 aa).

Positions 1–36 (MSSPTPPGGQRTLQKRKQGSSQKVAASAPKKNTNSN) are disordered. Over 1–53 (MSSPTPPGGQRTLQKRKQGSSQKVAASAPKKNTNSNNSILKIYSDEATGLRVD) the chain is Cytoplasmic. Residues 19–36 (GSSQKVAASAPKKNTNSN) show a composition bias toward polar residues. Residues 54–74 (PLVVLFLAVGFIFSVVALHVI) form a helical membrane-spanning segment.

It belongs to the SEC61-beta family. In terms of assembly, component of the heterotrimeric Sec61 complex, which is composed of SSH1, SBH1 and SSS1. Presumably three to four Sec61 heterotrimers assemble into an oligomeric ring with a central aqueous pore. In cotranslational ER import, the pore diameter varies from 9-15 A in a ribosome-free resting state to 40-60 A in a functional state when associated with the ribosome. The Sec61 complex is part of a channel-forming translocon complex whose composition seem to change dependent upon different functional states. During post-translational ER import the Sec61 complex associates with the Sec62/63 complex to form the Sec complex. SBH1 interacts OST2, OST4 and WBP1 components of the OT complex.

It is found in the endoplasmic reticulum membrane. Functionally, part of the Sec61 complex, which is the major component of a channel-forming translocon complex that mediates protein translocation across the endoplasmic reticulum (ER). The functional states of the translocon complex include co- and post-translational ER import, cotranslational membrane protein integration and retrograde transport of misfolded proteins out of the ER. In the cotranslational pathway, ribosomes synthesizing presecretory proteins are targeted to the translocon by the cytosolic signal recognition particle (SRP) and its ER-localized receptor. The association of the Sec61 complex with the ribosome is mediated by the 28S rRNA of the large ribosomal subunit. SRP-independent post-translational translocation requires the association of additional factors, such as the Sec62/63 complex and KAR2. This Saccharomyces cerevisiae (strain ATCC 204508 / S288c) (Baker's yeast) protein is Protein transport protein SBH1 (SBH1).